The following is a 451-amino-acid chain: Tubulin gamma-1 chain (451 aa).

Position 142–148 (142–148 (AGGTGSG)) interacts with GTP.

This sequence belongs to the tubulin family.

Its subcellular location is the cytoplasm. It is found in the cytoskeleton. The protein resides in the microtubule organizing center. It localises to the centrosome. The protein localises to the spindle. In terms of biological role, tubulin is the major constituent of microtubules. The gamma chain is found at microtubule organizing centers (MTOC) such as the spindle poles or the centrosome, suggesting that it is involved in the minus-end nucleation of microtubule assembly. This chain is Tubulin gamma-1 chain (tubg1), found in Xenopus laevis (African clawed frog).